We begin with the raw amino-acid sequence, 407 residues long: Peptidase T (407 aa).

H82 provides a ligand contact to Zn(2+). D84 is an active-site residue. D143 contacts Zn(2+). E177 serves as the catalytic Proton acceptor. Zn(2+)-binding residues include E178, D200, and H382.

The protein belongs to the peptidase M20B family. Zn(2+) is required as a cofactor.

Its subcellular location is the cytoplasm. The catalysed reaction is Release of the N-terminal residue from a tripeptide.. Its function is as follows. Cleaves the N-terminal amino acid of tripeptides. This chain is Peptidase T, found in Streptococcus pyogenes serotype M18 (strain MGAS8232).